The following is a 395-amino-acid chain: Abhydrolase domain-containing protein (395 aa).

The 215-residue stretch at 117 to 331 (PTIVINHGLT…INAIDDPIAP (215 aa)) folds into the AB hydrolase-1 domain. Active-site charge relay system residues include Ser200, Asp327, and His356.

This sequence belongs to the AB hydrolase superfamily. AB hydrolase 4 family.

This Dictyostelium discoideum (Social amoeba) protein is Abhydrolase domain-containing protein (abhd).